Here is a 340-residue protein sequence, read N- to C-terminus: 4-hydroxy-3-methylbut-2-enyl diphosphate reductase (340 aa).

Residue Cys-13 participates in [4Fe-4S] cluster binding. The (2E)-4-hydroxy-3-methylbut-2-enyl diphosphate site is built by His-42 and His-75. Residues His-42 and His-75 each contribute to the dimethylallyl diphosphate site. 2 residues coordinate isopentenyl diphosphate: His-42 and His-75. Cys-97 contributes to the [4Fe-4S] cluster binding site. His-125 lines the (2E)-4-hydroxy-3-methylbut-2-enyl diphosphate pocket. Residue His-125 participates in dimethylallyl diphosphate binding. His-125 is an isopentenyl diphosphate binding site. Glu-127 functions as the Proton donor in the catalytic mechanism. Thr-165 contributes to the (2E)-4-hydroxy-3-methylbut-2-enyl diphosphate binding site. Cys-195 is a binding site for [4Fe-4S] cluster. Residues Ser-223, Ser-224, Asn-225, and Ser-267 each contribute to the (2E)-4-hydroxy-3-methylbut-2-enyl diphosphate site. Positions 223, 224, 225, and 267 each coordinate dimethylallyl diphosphate. Residues Ser-223, Ser-224, Asn-225, and Ser-267 each contribute to the isopentenyl diphosphate site. Residues 317–340 (NNLDNKTAASEEADSLSNDTEQEA) form a disordered region. Polar residues predominate over residues 331 to 340 (SLSNDTEQEA).

It belongs to the IspH family. [4Fe-4S] cluster serves as cofactor.

It carries out the reaction isopentenyl diphosphate + 2 oxidized [2Fe-2S]-[ferredoxin] + H2O = (2E)-4-hydroxy-3-methylbut-2-enyl diphosphate + 2 reduced [2Fe-2S]-[ferredoxin] + 2 H(+). It catalyses the reaction dimethylallyl diphosphate + 2 oxidized [2Fe-2S]-[ferredoxin] + H2O = (2E)-4-hydroxy-3-methylbut-2-enyl diphosphate + 2 reduced [2Fe-2S]-[ferredoxin] + 2 H(+). Its pathway is isoprenoid biosynthesis; dimethylallyl diphosphate biosynthesis; dimethylallyl diphosphate from (2E)-4-hydroxy-3-methylbutenyl diphosphate: step 1/1. It functions in the pathway isoprenoid biosynthesis; isopentenyl diphosphate biosynthesis via DXP pathway; isopentenyl diphosphate from 1-deoxy-D-xylulose 5-phosphate: step 6/6. Functionally, catalyzes the conversion of 1-hydroxy-2-methyl-2-(E)-butenyl 4-diphosphate (HMBPP) into a mixture of isopentenyl diphosphate (IPP) and dimethylallyl diphosphate (DMAPP). Acts in the terminal step of the DOXP/MEP pathway for isoprenoid precursor biosynthesis. This is 4-hydroxy-3-methylbut-2-enyl diphosphate reductase from Zymomonas mobilis subsp. mobilis (strain ATCC 31821 / ZM4 / CP4).